A 268-amino-acid polypeptide reads, in one-letter code: Putative ABC transporter ATP-binding protein LMOf2365_1216 (268 aa).

Positions 2–237 constitute an ABC transporter domain; the sequence is LKTEHISFQY…KSNVEQAGLV (236 aa). 35 to 42 is a binding site for ATP; the sequence is GANGSGKS.

Belongs to the ABC transporter superfamily.

It is found in the cell membrane. Functionally, probably part of an ABC transporter complex. Responsible for energy coupling to the transport system. This is Putative ABC transporter ATP-binding protein LMOf2365_1216 from Listeria monocytogenes serotype 4b (strain F2365).